A 163-amino-acid chain; its full sequence is Putative 4-hydroxy-4-methyl-2-oxoglutarate aldolase (163 aa).

Residues Gly76–Leu79 and Arg98 contribute to the substrate site. Residue Asp99 coordinates a divalent metal cation.

It belongs to the class II aldolase/RraA-like family. In terms of assembly, homotrimer. The cofactor is a divalent metal cation.

It carries out the reaction 4-hydroxy-4-methyl-2-oxoglutarate = 2 pyruvate. The catalysed reaction is oxaloacetate + H(+) = pyruvate + CO2. Catalyzes the aldol cleavage of 4-hydroxy-4-methyl-2-oxoglutarate (HMG) into 2 molecules of pyruvate. Also contains a secondary oxaloacetate (OAA) decarboxylase activity due to the common pyruvate enolate transition state formed following C-C bond cleavage in the retro-aldol and decarboxylation reactions. This Pseudomonas putida (strain GB-1) protein is Putative 4-hydroxy-4-methyl-2-oxoglutarate aldolase.